The primary structure comprises 141 residues: Nucleoside diphosphate kinase (141 aa).

ATP is bound by residues Lys9, Phe57, Arg85, Thr91, Arg102, and Asn112. The active-site Pros-phosphohistidine intermediate is the His115.

It belongs to the NDK family. Homotetramer. Mg(2+) is required as a cofactor.

Its subcellular location is the cytoplasm. The catalysed reaction is a 2'-deoxyribonucleoside 5'-diphosphate + ATP = a 2'-deoxyribonucleoside 5'-triphosphate + ADP. The enzyme catalyses a ribonucleoside 5'-diphosphate + ATP = a ribonucleoside 5'-triphosphate + ADP. Its function is as follows. Major role in the synthesis of nucleoside triphosphates other than ATP. The ATP gamma phosphate is transferred to the NDP beta phosphate via a ping-pong mechanism, using a phosphorylated active-site intermediate. This Chloroherpeton thalassium (strain ATCC 35110 / GB-78) protein is Nucleoside diphosphate kinase.